Consider the following 86-residue polypeptide: Neuropeptide-like 3 (86 aa).

Positions 1–16 (MFKLCVFVALLSLAAA) are cleaved as a signal peptide. Propeptides lie at residues 17–50 (APAP…VAPQ) and 63–75 (AITQ…LLIK). Isoleucine 85 is subject to Isoleucine amide.

The protein localises to the secreted. This Drosophila yakuba (Fruit fly) protein is Neuropeptide-like 3 (Nplp3).